The primary structure comprises 514 residues: Transmembrane protein 117 (514 aa).

Topologically, residues 1–15 (MGKDFRYYFQHPWSR) are cytoplasmic. A helical transmembrane segment spans residues 16–36 (MIVAYLVIFFNFLIFAEDPVS). At 37 to 65 (HSQTEANVIVVGNCFSFVTNKYPRGVGWR) the chain is on the extracellular side. A helical membrane pass occupies residues 66–86 (ILKVLLWLLAILTGLIAGKFL). Over 87 to 110 (FHQRLFGQLLRLKMFREDHGSWMT) the chain is Cytoplasmic. The helical transmembrane segment at 111–131 (MFFSTILFLFIFSHIYNTILL) threads the bilayer. At 132 to 154 (MDGNMGAYIITDYMGIRNESFMK) the chain is on the extracellular side. Residues 155–175 (LAAVGTWMGDFVTAWMVTDMM) form a helical membrane-spanning segment. Residues 176–198 (LQDKPYPDWGKSARAFWKKGNVR) are Cytoplasmic-facing. The helical transmembrane segment at 199–219 (ITLFWTVLFTLTSVVVLVITT) threads the bilayer. Over 220–239 (DWISWDKLNRGFLPSDEVSR) the chain is Extracellular. Residues 240–260 (AFLASFILVFDLLIVMQDWEF) traverse the membrane as a helical segment. At 261–295 (PHFMGDVDVNLPGLHTPHMQFKIPFFQKIFKEEYR) the chain is on the cytoplasmic side. A helical transmembrane segment spans residues 296–316 (IHITGKWFNYGIIFLVLILDL). Residues 317–394 (NMWKNQIFYK…FIGASLDVKC (78 aa)) lie on the Extracellular side of the membrane. N-linked (GlcNAc...) asparagine glycans are attached at residues Asn-353 and Asn-371. A helical membrane pass occupies residues 395–415 (LAFVPSLIAFVWFGFFIWFFG). Residues 416-514 (RFLKNEPRME…PTTSKSTPTN (99 aa)) are Cytoplasmic-facing. Disordered stretches follow at residues 429 to 459 (KTYT…SVED) and 486 to 514 (ENLS…TPTN). The segment covering 438–448 (SPSEHSKDMGI) has biased composition (basic and acidic residues). Thr-453 carries the phosphothreonine modification.

This sequence belongs to the TMEM117 family.

It is found in the cell membrane. Functionally, involved in endoplasmic reticulum (ER) stress-induced cell death pathway. In Homo sapiens (Human), this protein is Transmembrane protein 117 (TMEM117).